A 717-amino-acid polypeptide reads, in one-letter code: Choline transporter-like protein 5 (717 aa).

The segment at 1–24 is disordered; that stretch reads MNDTEKPADTASEEEDFGDPRTYD. Residues 1–38 are Cytoplasmic-facing; the sequence is MNDTEKPADTASEEEDFGDPRTYDPDFKGPVSNRSCTD. A helical transmembrane segment spans residues 39 to 59; it reads VLCCMIFLLCIVGYIVLGLVA. The Extracellular segment spans residues 60 to 242; sequence WVHGDPRRAA…KVFEDYATTW (183 aa). N-linked (GlcNAc...) asparagine glycosylation is found at asparagine 88 and asparagine 190. A helical transmembrane segment spans residues 243–263; the sequence is YWILIGLMIAMVLSWIFLILL. Residues 264 to 265 lie on the Cytoplasmic side of the membrane; it reads RF. Residues 266-286 form a helical membrane-spanning segment; that stretch reads IAGCLFWVFMIGVIGIIGYGI. Over 287 to 325 the chain is Extracellular; the sequence is WHCYQQYTNLQEHPRSVLTVYDIGIQTNISMYFELQQTW. N-linked (GlcNAc...) asparagine glycosylation is present at asparagine 314. Residues 326–346 traverse the membrane as a helical segment; that stretch reads FTLMIILCIIEVIVILMLIFL. Residues 347–351 are Cytoplasmic-facing; that stretch reads RNRIR. A helical membrane pass occupies residues 352-372; the sequence is VAIILLKEGSKAIGYVPSTLV. Topologically, residues 373–374 are extracellular; it reads YP. A helical membrane pass occupies residues 375–395; that stretch reads ALTFILLSICICYWVVTAVFL. Topologically, residues 396–460 are cytoplasmic; the sequence is ATSGVPVYKV…QYIPTFHVYN (65 aa). Residues 461-481 traverse the membrane as a helical segment; that stretch reads LFVFLWLINFVIALGQCALAG. The Extracellular segment spans residues 482 to 515; it reads AFATYYWAMKKPDDIPRYPLFTAFGRAIRYHTGS. Residues 516–536 form a helical membrane-spanning segment; it reads LAFGSLIIALIQMFKIVLEYL. At 537 to 610 the chain is on the cytoplasmic side; that stretch reads NHRLKRTENT…KVAVTDEVTY (74 aa). Residues 611–631 traverse the membrane as a helical segment; sequence FVLFLGKILVAGSIGVLAFLF. Over 632-649 the chain is Extracellular; sequence FTQRLPVIAQGPASLNYY. A helical transmembrane segment spans residues 650–670; it reads WVPLLTVILGSYLIAHGFFSV. Over 671 to 717 the chain is Cytoplasmic; that stretch reads YAMCVETIFICFLEDLERNDGSTARPYYVSQPLLKIFQEENLQTKQQ.

The protein belongs to the CTL (choline transporter-like) family.

The protein localises to the cell membrane. It catalyses the reaction choline(out) + n H(+)(in) = choline(in) + n H(+)(out). In terms of biological role, choline/H+ antiporter. The protein is Choline transporter-like protein 5 (SLC44A5) of Macaca fascicularis (Crab-eating macaque).